A 589-amino-acid polypeptide reads, in one-letter code: uncharacterized protein (589 aa).

A run of 14 helical transmembrane segments spans residues 90-110 (YIVI…QTVI), 128-148 (SWIG…CGIM), 162-182 (IVLF…LWLV), 189-209 (GIGG…ITPL), 217-237 (GCMG…GGAI), 245-265 (WIFF…IFFL), 284-304 (FVGI…LNIG), 311-331 (AHAN…GFVV), 355-375 (VMVT…YIPI), 390-410 (VHTL…GMGI), 418-438 (YPMI…IAIY), 448-468 (GFLA…LIAI), 483-503 (AFML…AVIY), and 545-565 (IRTI…LSFF).

It belongs to the major facilitator superfamily. TCR/Tet family.

It is found in the membrane. This is an uncharacterized protein from Schizosaccharomyces pombe (strain 972 / ATCC 24843) (Fission yeast).